The chain runs to 454 residues: Glutamyl-tRNA reductase (454 aa).

Residues 49-52 (TCNR), S109, 114-116 (ETQ), and Q120 each bind substrate. The Nucleophile role is filled by C50. An NADP(+)-binding site is contributed by 189 to 194 (GAGKMS). Basic and acidic residues predominate over residues 432–442 (DHAEQSWKEGQ). The interval 432–454 (DHAEQSWKEGQRPSLNQGMALRT) is disordered.

It belongs to the glutamyl-tRNA reductase family. As to quaternary structure, homodimer.

The enzyme catalyses (S)-4-amino-5-oxopentanoate + tRNA(Glu) + NADP(+) = L-glutamyl-tRNA(Glu) + NADPH + H(+). It participates in porphyrin-containing compound metabolism; protoporphyrin-IX biosynthesis; 5-aminolevulinate from L-glutamyl-tRNA(Glu): step 1/2. Functionally, catalyzes the NADPH-dependent reduction of glutamyl-tRNA(Glu) to glutamate 1-semialdehyde (GSA). This Shouchella clausii (strain KSM-K16) (Alkalihalobacillus clausii) protein is Glutamyl-tRNA reductase.